A 316-amino-acid polypeptide reads, in one-letter code: Methionyl-tRNA formyltransferase (316 aa).

Residue 110-113 coordinates (6S)-5,6,7,8-tetrahydrofolate; sequence SLLP.

This sequence belongs to the Fmt family.

It catalyses the reaction L-methionyl-tRNA(fMet) + (6R)-10-formyltetrahydrofolate = N-formyl-L-methionyl-tRNA(fMet) + (6S)-5,6,7,8-tetrahydrofolate + H(+). Functionally, attaches a formyl group to the free amino group of methionyl-tRNA(fMet). The formyl group appears to play a dual role in the initiator identity of N-formylmethionyl-tRNA by promoting its recognition by IF2 and preventing the misappropriation of this tRNA by the elongation apparatus. The sequence is that of Methionyl-tRNA formyltransferase from Bacillus licheniformis (strain ATCC 14580 / DSM 13 / JCM 2505 / CCUG 7422 / NBRC 12200 / NCIMB 9375 / NCTC 10341 / NRRL NRS-1264 / Gibson 46).